Here is a 307-residue protein sequence, read N- to C-terminus: O-acetylserine dependent cystathionine beta-synthase (307 aa).

At Lys-44 the chain carries N6-(pyridoxal phosphate)lysine. Residues Asn-74, 178 to 182 (GSGGT), and Ser-265 each bind pyridoxal 5'-phosphate.

This sequence belongs to the cysteine synthase/cystathionine beta-synthase family. Requires pyridoxal 5'-phosphate as cofactor.

The enzyme catalyses O-acetyl-L-serine + L-homocysteine = L,L-cystathionine + acetate + H(+). Functionally, catalyzes the conversion of O-acetylserine and homocysteine to cystathionine. The sequence is that of O-acetylserine dependent cystathionine beta-synthase (mccA) from Bacillus subtilis (strain 168).